A 348-amino-acid polypeptide reads, in one-letter code: N-formyl peptide receptor 2 (348 aa).

Asn-1 carries an N-linked (GlcNAc...) asparagine glycan. At 1-24 (NFSTPLSEYEEVSYESAGYTVLQI) the chain is on the extracellular side. A helical membrane pass occupies residues 25 to 47 (LPLVVLGVTFVLGVLGNGLVIWV). The Cytoplasmic portion of the chain corresponds to 48-58 (AGFRMTRTVTT). The chain crosses the membrane as a helical span at residues 59–80 (ICYLNLALADFSFTATLPFLIV). The Extracellular segment spans residues 81 to 97 (SMAMGEKWPFGWFLCKL). Cys-95 and Cys-173 are joined by a disulfide. A helical transmembrane segment spans residues 98-118 (IHIVVDINLFGSVFLIGFIAL). Residues 119–137 (DRCICVLHPVWAQNHRTVS) lie on the Cytoplasmic side of the membrane. Residues 138–159 (LAMKVIVGPWILALVLTLPVFL) traverse the membrane as a helical segment. At 160–202 (FLTTVTIPNGDTYCTFNFASWGGTPEKRLKVAITMLTARGIIR) the chain is on the extracellular side. Residues 203–223 (FVIGFSMPMSIVATCYGLIAA) form a helical membrane-spanning segment. Topologically, residues 224–239 (KIHKKGMIKSSRPLRV) are cytoplasmic. A helical membrane pass occupies residues 240-263 (LTAVVASFFICWFPFQLVALLSTV). At 264–283 (WLKEILVDGKYKIINILVNP) the chain is on the extracellular side. Residues 284 to 303 (TSSLAFFNSCLNPMLYVFVG) traverse the membrane as a helical segment. Residues 304–348 (QDFRERLIHSLPTSLERALSEDSAPTNDTAASCASPPAETELQAM) lie on the Cytoplasmic side of the membrane. The interval 322–348 (LSEDSAPTNDTAASCASPPAETELQAM) is disordered. The segment covering 326 to 335 (SAPTNDTAAS) has biased composition (polar residues).

This sequence belongs to the G-protein coupled receptor 1 family. Interacts with APP; the interaction takes place at the cell surface and the complex is then rapidly internalized.

It localises to the cell membrane. Its function is as follows. Low affinity receptor for N-formyl-methionyl peptides, which are powerful neutrophil chemotactic factors. Binding of FMLP to the receptor causes activation of neutrophils. This response is mediated via a G-protein that activates a phosphatidylinositol-calcium second messenger system. Receptor for the chemokine-like protein FAM19A5, mediating FAM19A5-stimulated macrophage chemotaxis and the inhibitory effect on TNFSF11/RANKL-induced osteoclast differentiation. This Macaca mulatta (Rhesus macaque) protein is N-formyl peptide receptor 2 (FPR2).